Here is a 405-residue protein sequence, read N- to C-terminus: NADH-quinone oxidoreductase subunit D (405 aa).

The protein belongs to the complex I 49 kDa subunit family. As to quaternary structure, NDH-1 is composed of 14 different subunits. Subunits NuoB, C, D, E, F, and G constitute the peripheral sector of the complex.

It localises to the cell inner membrane. It carries out the reaction a quinone + NADH + 5 H(+)(in) = a quinol + NAD(+) + 4 H(+)(out). Functionally, NDH-1 shuttles electrons from NADH, via FMN and iron-sulfur (Fe-S) centers, to quinones in the respiratory chain. The immediate electron acceptor for the enzyme in this species is believed to be ubiquinone. Couples the redox reaction to proton translocation (for every two electrons transferred, four hydrogen ions are translocated across the cytoplasmic membrane), and thus conserves the redox energy in a proton gradient. This is NADH-quinone oxidoreductase subunit D from Leptospira interrogans serogroup Icterohaemorrhagiae serovar copenhageni (strain Fiocruz L1-130).